We begin with the raw amino-acid sequence, 110 residues long: Large ribosomal subunit protein uL22 (110 aa).

It belongs to the universal ribosomal protein uL22 family. Part of the 50S ribosomal subunit.

Its function is as follows. This protein binds specifically to 23S rRNA; its binding is stimulated by other ribosomal proteins, e.g. L4, L17, and L20. It is important during the early stages of 50S assembly. It makes multiple contacts with different domains of the 23S rRNA in the assembled 50S subunit and ribosome. Functionally, the globular domain of the protein is located near the polypeptide exit tunnel on the outside of the subunit, while an extended beta-hairpin is found that lines the wall of the exit tunnel in the center of the 70S ribosome. In Geobacter metallireducens (strain ATCC 53774 / DSM 7210 / GS-15), this protein is Large ribosomal subunit protein uL22.